A 230-amino-acid polypeptide reads, in one-letter code: Ribose-5-phosphate isomerase A (230 aa).

Residues 31–34 (TGST), 87–90 (DGAD), and 100–103 (KGGG) each bind substrate. Glu-109 functions as the Proton acceptor in the catalytic mechanism. Residue Lys-127 coordinates substrate.

Belongs to the ribose 5-phosphate isomerase family. As to quaternary structure, homodimer.

The catalysed reaction is aldehydo-D-ribose 5-phosphate = D-ribulose 5-phosphate. The protein operates within carbohydrate degradation; pentose phosphate pathway; D-ribose 5-phosphate from D-ribulose 5-phosphate (non-oxidative stage): step 1/1. Its function is as follows. Catalyzes the reversible conversion of ribose-5-phosphate to ribulose 5-phosphate. The sequence is that of Ribose-5-phosphate isomerase A from Lactobacillus delbrueckii subsp. bulgaricus (strain ATCC 11842 / DSM 20081 / BCRC 10696 / JCM 1002 / NBRC 13953 / NCIMB 11778 / NCTC 12712 / WDCM 00102 / Lb 14).